Reading from the N-terminus, the 560-residue chain is MSASLDTGDFQEFLKHGLTAIASAPGSETRHSPKREEQLREKRAGLPDRHRRPIPARSRLVMLPKVETEAPGLVRSHGEQGQMPENMQVSQFKMVNYSYDEDLEELCPVCGDKVSGYHYGLLTCESCKGFFKRTVQNQKRYTCIENQNCQIDKTQRKRCPYCRFKKCIDVGMKLEAVRADRMRGGRNKFGPMYKRDRALKQQKKALIRANGLKLEAMSQVIQAMPSDLTSAIQNIHSASKGLPLSHVALPPTDYDRSPFVTSPISMTMPPHSSLHGYQPYGHFPSRAIKSEYPDPYSSSPESMMGYSYMDGYQTNSPASIPHLILELLKCEPDEPQVQAKIMAYLQQEQSNRNRQEKLSAFGLLCKMADQTLFSIVEWARSSIFFRELKVDDQMKLLQNCWSELLILDHIYRQVAHGKEGTIFLVTGEHVDYSTIISHTEVAFNNLLSLAQELVVRLRSLQFDQREFVCLKFLVLFSSDVKNLENLQLVEGVQEQVNAALLDYTVCNYPQQTEKFGQLLLRLPEIRAISKQAEDYLYYKHVNGDVPYNNLLIEMLHAKRA.

Positions 21-55 are disordered; sequence IASAPGSETRHSPKREEQLREKRAGLPDRHRRPIP. The segment covering 28 to 48 has biased composition (basic and acidic residues); that stretch reads ETRHSPKREEQLREKRAGLPD. The segment at residues 104–175 is a DNA-binding region (nuclear receptor); that stretch reads EELCPVCGDK…KCIDVGMKLE (72 aa). 8 residues coordinate Zn(2+): cysteine 107, cysteine 110, cysteine 124, cysteine 127, cysteine 143, cysteine 149, cysteine 159, and cysteine 162. NR C4-type zinc fingers lie at residues 107 to 127 and 143 to 167; these read CPVC…CESC and CIEN…FKKC. The tract at residues 173–188 is C-terminal extension (CTE); that stretch reads KLEAVRADRMRGGRNK. The FTZ-F1 box motif lies at 189–208; it reads FGPMYKRDRALKQQKKALIR. A Glycyl lysine isopeptide (Lys-Gly) (interchain with G-Cter in SUMO1) cross-link involves residue lysine 289. The region spanning 319–558 is the NR LBD domain; sequence SIPHLILELL…NLLIEMLHAK (240 aa). Tyrosine 535 and lysine 539 together coordinate a phospholipid derivative. The tract at residues 547-558 is AF-2; it reads YNNLLIEMLHAK.

Belongs to the nuclear hormone receptor family. NR5 subfamily. In terms of assembly, monomer; Binds DNA as a monomer. Interacts with nuclear receptor corepressors NR0B1 and NR0B2; repressing NR5A2 nuclear receptor activity. Interacts with nuclear receptor coactivators CTNNB1, PPARGC1A and NCOA2; interaction takes place following ligand-binding and promotes target gene activation. Interacts (when sumoylated) with GPS2; interaction with GPS2 onto hepatic acute phase protein promoters prevents N-Cor corepressor complex dissociation. Interacts with HNF1A. Interacts with GRIP1. In terms of processing, sumoylated by SUMO1 at Lys-289 during the hepatic acute phase response, leading to promote interaction with GPS2 and prevent N-Cor corepressor complex dissociation.

Its subcellular location is the nucleus. The protein resides in the chromosome. Functionally, orphan nuclear receptor that binds DNA as a monomer to the 5'-TCAAGGCCA-3' sequence and controls expression of target genes: regulates key biological processes, such as early embryonic development, cholesterol and bile acid synthesis pathways, as well as liver and pancreas morphogenesis. Ligand-binding causes conformational change which causes recruitment of coactivators, promoting target gene activation. The specific ligand is unknown, but specific phospholipids, such as phosphatidylethanolamine, phosphatidylserine, dilauroyl phosphatidylcholine and diundecanoyl phosphatidylcholine can act as ligand in vitro. Acts as a pioneer transcription factor, which unwraps target DNA from histones and elicits local opening of closed chromatin. Plays a central role during preimplantation stages of embryonic development. Plays a minor role in zygotic genome activation (ZGA) by regulating a small set of two-cell stage genes. Plays a major role in morula development (2-16 cells embryos) by acting as a master regulator at the 8-cell stage, controlling expression of lineage-specifying transcription factors and genes involved in mitosis, telomere maintenance and DNA repair. Zygotic NR5A2 binds to both closed and open chromatin with other transcription factors, often at SINE B1/Alu repeats DNA elements, promoting chromatin accessibility at nearby regulatory regions. Also involved in the epiblast stage of development and embryonic stem cell pluripotency, by promoting expression of POU5F1/OCT4. Regulates other processes later in development, such as formation of connective tissue in lower jaw and middle ear, neural stem cell differentiation, ovarian follicle development and Sertoli cell differentiation. Involved in exocrine pancreas development and acinar cell differentiation. Acts as an essential transcriptional regulator of lipid metabolism. Key regulator of cholesterol 7-alpha-hydroxylase gene (CYP7A) expression in liver. Activates the transcription of CYP2C38. Also acts as a negative regulator of inflammation in different organs, such as intestine, liver and pancreas. Protects against intestinal inflammation via its ability to regulate glucocorticoid production. Plays an anti-inflammatory role during the hepatic acute phase response by acting as a corepressor: inhibits the hepatic acute phase response by preventing dissociation of the N-Cor corepressor complex. Acts as a regulator of immunity by promoting lymphocyte T-cell development, proliferation and effector functions. Also involved in resolution of endoplasmic reticulum stress in the liver. This chain is Nuclear receptor subfamily 5 group A member 2, found in Mus musculus (Mouse).